The following is a 252-amino-acid chain: Trans-aconitate 2-methyltransferase (252 aa).

It belongs to the methyltransferase superfamily. Tam family.

It localises to the cytoplasm. It catalyses the reaction trans-aconitate + S-adenosyl-L-methionine = (E)-3-(methoxycarbonyl)pent-2-enedioate + S-adenosyl-L-homocysteine. Catalyzes the S-adenosylmethionine monomethyl esterification of trans-aconitate. In Escherichia coli O9:H4 (strain HS), this protein is Trans-aconitate 2-methyltransferase.